A 359-amino-acid polypeptide reads, in one-letter code: 4-hydroxy-3-methylbut-2-en-1-yl diphosphate synthase (flavodoxin) (359 aa).

Residues Cys-264, Cys-267, Cys-299, and Glu-306 each coordinate [4Fe-4S] cluster.

The protein belongs to the IspG family. It depends on [4Fe-4S] cluster as a cofactor.

It carries out the reaction (2E)-4-hydroxy-3-methylbut-2-enyl diphosphate + oxidized [flavodoxin] + H2O + 2 H(+) = 2-C-methyl-D-erythritol 2,4-cyclic diphosphate + reduced [flavodoxin]. The protein operates within isoprenoid biosynthesis; isopentenyl diphosphate biosynthesis via DXP pathway; isopentenyl diphosphate from 1-deoxy-D-xylulose 5-phosphate: step 5/6. Its function is as follows. Converts 2C-methyl-D-erythritol 2,4-cyclodiphosphate (ME-2,4cPP) into 1-hydroxy-2-methyl-2-(E)-butenyl 4-diphosphate. The polypeptide is 4-hydroxy-3-methylbut-2-en-1-yl diphosphate synthase (flavodoxin) (Helicobacter pylori (strain Shi470)).